A 99-amino-acid chain; its full sequence is UPF0751 protein BCE_A0020 (99 aa).

This sequence belongs to the UPF0751 family.

The chain is UPF0751 protein BCE_A0020 from Bacillus cereus (strain ATCC 10987 / NRS 248).